We begin with the raw amino-acid sequence, 691 residues long: Glycine--tRNA ligase beta subunit (691 aa).

Belongs to the class-II aminoacyl-tRNA synthetase family. As to quaternary structure, tetramer of two alpha and two beta subunits.

The protein localises to the cytoplasm. It catalyses the reaction tRNA(Gly) + glycine + ATP = glycyl-tRNA(Gly) + AMP + diphosphate. This chain is Glycine--tRNA ligase beta subunit, found in Limosilactobacillus reuteri (strain DSM 20016) (Lactobacillus reuteri).